Consider the following 387-residue polypeptide: 3-ketoacyl-CoA thiolase (387 aa).

The active-site Acyl-thioester intermediate is cysteine 91. Residues histidine 343 and cysteine 373 each act as proton acceptor in the active site.

It belongs to the thiolase-like superfamily. Thiolase family. Heterotetramer of two alpha chains (FadB) and two beta chains (FadA).

The protein localises to the cytoplasm. It carries out the reaction an acyl-CoA + acetyl-CoA = a 3-oxoacyl-CoA + CoA. The protein operates within lipid metabolism; fatty acid beta-oxidation. Catalyzes the final step of fatty acid oxidation in which acetyl-CoA is released and the CoA ester of a fatty acid two carbons shorter is formed. The polypeptide is 3-ketoacyl-CoA thiolase (Shigella dysenteriae serotype 1 (strain Sd197)).